Here is a 91-residue protein sequence, read N- to C-terminus: MWPVLWAAARTYAPYITFPVAFVVGAVGYQLEWFIRGTPEQPVEELSILEKREERTLQETMGKDVTQVLSLKEKLEFTPKAVLNRNRQEKS.

Residues Y12–F34 form a helical membrane-spanning segment.

The protein belongs to the SMIM12 family.

The protein localises to the membrane. The chain is Small integral membrane protein 12 (smim12) from Xenopus tropicalis (Western clawed frog).